Consider the following 1465-residue polypeptide: Myomesin-2 (1465 aa).

The interval 38–61 is disordered; it reads ASTQASSQKSLSQRSSSQRASSQT. A compositionally biased stretch (low complexity) spans 41–61; sequence QASSQKSLSQRSSSQRASSQT. 2 consecutive Ig-like C2-type domains span residues 154–245 and 266–371; these read PEIL…AAVV and PLSS…AFLF. Fibronectin type-III domains are found at residues 385-480, 513-608, 614-707, 710-812, and 815-912; these read APMD…ALDP, PPTG…AQDV, APGR…VQAA, VPSH…TMPE, and PAYD…ARPG. Ig-like C2-type domains lie at 904 to 1002, 1130 to 1211, and 1345 to 1434; these read PVLV…EELE, PHFA…QDVS, and RLIG…VTVS. The segment at 1442–1465 is disordered; sequence IPDMAPPQQAKPKLIPASASAAGQ.

In terms of assembly, interacts with TTN/titin.

The protein localises to the cytoplasm. The protein resides in the myofibril. It is found in the sarcomere. It localises to the m line. In terms of biological role, major component of the vertebrate myofibrillar M band. Binds myosin, titin, and light meromyosin. This binding is dose dependent. The chain is Myomesin-2 (MYOM2) from Homo sapiens (Human).